The primary structure comprises 598 residues: Urease subunit alpha (598 aa).

Residues 136 to 598 enclose the Urease domain; that stretch reads GGLDTHVHWL…APLAQRYFLF (463 aa). 3 residues coordinate Ni(2+): H141, H143, and K223. Position 223 is an N6-carboxylysine (K223). Residue H225 participates in substrate binding. Residues H252 and H278 each coordinate Ni(2+). H326 (proton donor) is an active-site residue. D366 serves as a coordination point for Ni(2+).

It belongs to the metallo-dependent hydrolases superfamily. Urease alpha subunit family. As to quaternary structure, heterotrimer of UreA (gamma), UreB (beta) and UreC (alpha) subunits. Three heterotrimers associate to form the active enzyme. The cofactor is Ni cation. Post-translationally, carboxylation allows a single lysine to coordinate two nickel ions.

The protein localises to the cytoplasm. It catalyses the reaction urea + 2 H2O + H(+) = hydrogencarbonate + 2 NH4(+). The protein operates within nitrogen metabolism; urea degradation; CO(2) and NH(3) from urea (urease route): step 1/1. This Ureaplasma urealyticum serovar 10 (strain ATCC 33699 / Western) protein is Urease subunit alpha.